The following is a 442-amino-acid chain: Tubulin beta chain (442 aa).

8 residues coordinate GTP: glutamine 11, glutamate 69, serine 138, glycine 142, threonine 143, glycine 144, asparagine 204, and asparagine 226. Position 69 (glutamate 69) interacts with Mg(2+).

It belongs to the tubulin family. In terms of assembly, dimer of alpha and beta chains. A typical microtubule is a hollow water-filled tube with an outer diameter of 25 nm and an inner diameter of 15 nM. Alpha-beta heterodimers associate head-to-tail to form protofilaments running lengthwise along the microtubule wall with the beta-tubulin subunit facing the microtubule plus end conferring a structural polarity. Microtubules usually have 13 protofilaments but different protofilament numbers can be found in some organisms and specialized cells. The cofactor is Mg(2+).

Its subcellular location is the cytoplasm. The protein resides in the cytoskeleton. In terms of biological role, tubulin is the major constituent of microtubules, a cylinder consisting of laterally associated linear protofilaments composed of alpha- and beta-tubulin heterodimers. Microtubules grow by the addition of GTP-tubulin dimers to the microtubule end, where a stabilizing cap forms. Below the cap, tubulin dimers are in GDP-bound state, owing to GTPase activity of alpha-tubulin. This chain is Tubulin beta chain (bPT2), found in Paramecium tetraurelia.